A 376-amino-acid polypeptide reads, in one-letter code: Immunoglobulin G-binding protein H (376 aa).

Positions 1-41 (MTRQQTKKNYSLRKLKTGTASVAVALTVLGAGFANQTTVKA) are cleaved as a signal peptide. The interval 69 to 271 (TSLENEKLKS…AAKKELEANH (203 aa)) is disordered. Composition is skewed to basic and acidic residues over residues 72 to 146 (ENEK…KRYQ), 156 to 203 (ETEK…DKQI), 211 to 245 (LSRD…DKQI), and 253 to 271 (LSRD…EANH). C repeat units lie at residues 153-187 (QQLE…EAEH), 195-229 (QKLK…EANH), and 237-271 (QKLK…EANH). D repeat units lie at residues 272 to 277 (QKLEAE), 278 to 283 (AKALKE), 286 to 291 (AKQAEE), and 293 to 298 (AKLRAG). The disordered stretch occupies residues 292 to 348 (LAKLRAGKASDSQTPDTKPGNKAVPGKGQAPQAGTKPNQNKAPMKETKRQLPSTGET). An LPXTG sorting signal motif is present at residues 342–346 (LPSTG). A Pentaglycyl murein peptidoglycan amidated threonine modification is found at Thr345. The propeptide at 346–376 (GETANPFFTAAALTVMATAGVAAVVKRKEEN) is removed by sortase.

Belongs to the M protein family.

Its subcellular location is the secreted. The protein resides in the cell wall. The polypeptide is Immunoglobulin G-binding protein H (Streptococcus pyogenes serotype M1).